A 309-amino-acid chain; its full sequence is MAQEADGIRLDQRHGKARVRVGRVWRHAHDGSHHFVEWNVSISLLSHCLSSYRLDDNSDIVATDTIKNTVYVKAKECGDRLSVEEFAILIGKHFCSFYPQVFTAIVNIIEKPWERVSIDGKPHLHGFKLGSENHTTEARVEKSGALNLTSGIGGLALLKTTQSGFERFVRDKYTILPETRERMLATEVNASWRYSYESVASIPTKGLYFSEKFMDVKKVLMDTFFGPPETGVYSPSVQRTLYLMGSAVLKRFADVSSIHLKMPNIHFLPVNLSTKENPSMVKFKDDVYLPTDEPHGSIEATLSRITSKL.

Alanine 2 bears the N-acetylalanine mark. Residues lysine 16 and threonine 63 each act as charge relay system in the active site. Urate-binding residues include threonine 63, aspartate 64, phenylalanine 165, arginine 182, valine 237, glutamine 238, and asparagine 264. Histidine 266 (charge relay system) is an active-site residue. The Microbody targeting signal motif lies at 307 to 309 (SKL).

It belongs to the uricase family.

The protein resides in the peroxisome. The catalysed reaction is urate + O2 + H2O = 5-hydroxyisourate + H2O2. The protein operates within purine metabolism; urate degradation; (S)-allantoin from urate: step 1/3. Catalyzes the oxidation of uric acid to 5-hydroxyisourate, which is further processed to form (S)-allantoin. In Arabidopsis thaliana (Mouse-ear cress), this protein is Uricase.